Consider the following 129-residue polypeptide: Modulator protein MzrA (129 aa).

The Cytoplasmic portion of the chain corresponds to Met1–His14. A helical transmembrane segment spans residues Tyr15–Val35. Over Gln36 to Gly129 the chain is Periplasmic.

It belongs to the MzrA family. In terms of assembly, interacts with EnvZ.

Its subcellular location is the cell inner membrane. Functionally, modulates the activity of the EnvZ/OmpR two-component regulatory system, probably by directly modulating EnvZ enzymatic activity and increasing stability of phosphorylated OmpR. The chain is Modulator protein MzrA from Yersinia pestis (strain Pestoides F).